The primary structure comprises 103 residues: Small ribosomal subunit protein uS10 (103 aa).

This sequence belongs to the universal ribosomal protein uS10 family. As to quaternary structure, part of the 30S ribosomal subunit.

In terms of biological role, involved in the binding of tRNA to the ribosomes. This chain is Small ribosomal subunit protein uS10, found in Xylella fastidiosa (strain 9a5c).